The chain runs to 1235 residues: ATP-dependent helicase/nuclease subunit A (1235 aa).

The region spanning 3-471 (TKWTETQKSA…IKLSENFRSR (469 aa)) is the UvrD-like helicase ATP-binding domain. 24 to 31 (AGAGTGKT) contributes to the ATP binding site. Positions 509–808 (PFEGNCGGDV…RIMSIHKSKG (300 aa)) constitute a UvrD-like helicase C-terminal domain.

Belongs to the helicase family. AddA subfamily. Heterodimer of AddA and AddB/RexB. The cofactor is Mg(2+).

It carries out the reaction Couples ATP hydrolysis with the unwinding of duplex DNA by translocating in the 3'-5' direction.. The enzyme catalyses ATP + H2O = ADP + phosphate + H(+). In terms of biological role, the heterodimer acts as both an ATP-dependent DNA helicase and an ATP-dependent, dual-direction single-stranded exonuclease. Recognizes the chi site generating a DNA molecule suitable for the initiation of homologous recombination. The AddA nuclease domain is required for chi fragment generation; this subunit has the helicase and 3' -&gt; 5' nuclease activities. This is ATP-dependent helicase/nuclease subunit A from Clostridium kluyveri (strain ATCC 8527 / DSM 555 / NBRC 12016 / NCIMB 10680 / K1).